The primary structure comprises 276 residues: Undecaprenyl-diphosphatase (276 aa).

A run of 6 helical transmembrane segments spans residues 43 to 63, 85 to 105, 109 to 129, 183 to 203, 218 to 238, and 254 to 274; these read RAMA…VWEF, LNLL…ADTI, LFNA…MLWA, AATE…AVYS, VFAI…RALL, and IAFG…WASA.

This sequence belongs to the UppP family.

It is found in the cell inner membrane. It carries out the reaction di-trans,octa-cis-undecaprenyl diphosphate + H2O = di-trans,octa-cis-undecaprenyl phosphate + phosphate + H(+). Its function is as follows. Catalyzes the dephosphorylation of undecaprenyl diphosphate (UPP). Confers resistance to bacitracin. The protein is Undecaprenyl-diphosphatase of Pseudomonas syringae pv. tomato (strain ATCC BAA-871 / DC3000).